A 186-amino-acid chain; its full sequence is MDQLMFPLYFHYEDVLRQDLLLKLNYANVMEVPGLCKIIVVPKTAPSIKNGKLAMEISCGQKLKQRASTGKSFRSNPFLGSNKDKKGYVSDLARQSTLRGHGMSHFLVRISTVMSLLDSPLEIRERSIQFSMETEFCEFSPELEDHFEIFEHIRGFNVTIVTSANTQDETLLLWSGFLQKDEGETQ.

Belongs to the universal ribosomal protein uL5 family.

It localises to the mitochondrion. In Solanum tuberosum (Potato), this protein is Large ribosomal subunit protein uL5m (RPL5).